The sequence spans 876 residues: ATP-dependent helicase Lhr-Core (876 aa).

7 residues coordinate ATP: Gln-37, Lys-60, Thr-61, Asp-175, Glu-176, Arg-374, and His-377. Positions 41-232 (IPLIKKGKNV…FLVGGNGDYE (192 aa)) constitute a Helicase ATP-binding domain. The DEAH box motif lies at 175 to 178 (DEIH). Residues 249–421 (PVKDLVHATE…NIHVPENPLD (173 aa)) enclose the Helicase C-terminal domain. Residues 422–506 (VLTQLIVAAS…IFFLNSGTIP (85 aa)) form a WH domain region. The tract at residues 507 to 876 (DEAMIPVKME…DLEYTEAGIK (370 aa)) is domain 4.

This sequence belongs to the Lhr helicase family. Lhr-Core subfamily. In terms of assembly, monomer.

The enzyme catalyses Couples ATP hydrolysis with the unwinding of duplex DNA by translocating in the 3'-5' direction.. The catalysed reaction is ATP + H2O = ADP + phosphate + H(+). Functionally, probably part of a 4-gene DNA damage response locus in which the upstream ups system, in combination with this downstream locus, functions in homologous recombination to rescue Sulfolobales from DNA-damaging threats. DNA helicase that translocates in a 3'-5' direction on single-stranded (ss)DNA. Binds Holliday junction (HJ) DNA, Y-shaped DNA, DNA with a 3'-overhang and single-stranded (ss)DNA with high affinity; binds double-stranded (ds)DNA with less affinity. Has helicase activity on DNA with a 3'-overhang, Y-shaped DNA and HJ DNA. Does not unwind blunt-ended dsDNA or DNA with a 5'-overhang. The chain is ATP-dependent helicase Lhr-Core from Sulfolobus acidocaldarius (strain ATCC 33909 / DSM 639 / JCM 8929 / NBRC 15157 / NCIMB 11770).